The primary structure comprises 199 residues: Urease accessory protein UreG (199 aa).

8 to 15 (GPVGSGKT) lines the GTP pocket.

This sequence belongs to the SIMIBI class G3E GTPase family. UreG subfamily. As to quaternary structure, homodimer. UreH, UreF and UreG form a complex that acts as a GTP-hydrolysis-dependent molecular chaperone, activating the urease apoprotein by helping to assemble the nickel containing metallocenter of UreC. The UreE protein probably delivers the nickel.

It localises to the cytoplasm. Facilitates the functional incorporation of the urease nickel metallocenter. This process requires GTP hydrolysis, probably effectuated by UreG. The polypeptide is Urease accessory protein UreG (Helicobacter acinonychis (strain Sheeba)).